The chain runs to 459 residues: uncharacterized protein (459 aa).

The next 2 helical transmembrane spans lie at 53–75 (IPLL…GLTL) and 111–133 (ARIA…CLCA). Positions 174–196 (HLDNPSAPHPSENPQSRAHPKQN) are disordered.

The protein resides in the cell membrane. This is an uncharacterized protein from Treponema pallidum (strain Nichols).